The following is a 613-amino-acid chain: MPTYRSATTTHGRNMAGARALWRATGVKEDDFGKPIIAVVNSFTQFVPGHVHLKDMGQLVAGEIEKAGGIAKEFNTIAVDDGIAMGHGGMLYSLPSRELIADSVEYMVNAHCADAMVCISNCDKITPGMMMAAMRLNIPVIFVSGGPMEAGKTKLSDQIIKLDLVDAMIQGADPTVSDAQSEQIERSACPTCGSCSGMFTANSMNCLTEALGLSQPGNGSMLATHADREQLFINAGKRIVELTKRYYEQDDESALPRNIADRAAFENAMALDIAMGGSSNTVLHLLASAQEGEIDFDMGDIDEMSRRVPHLCKVAPSTPKYHMEDVHRAGGVMAILGELDRAGLLNNQTKTVLGLTMQEQLAQYDIMQTEDEEILKFFRAGPAGIRTTKAFSQDCRWDRLDDDRKEGCIRTKENAFSQEGGLAVLSGNIAVDGCIVKTAGVDEENLKFQGPAIVFESQDSAVEGILGGKVKAGEVVVIRYEGPKGGPGMQEMLYPTTYLKSMGLGKACALLTDGRFSGGTSGLSIGHASPEAASGGTIGLVNDGDIITIDIPSRSITLDVPESELQARRAKQDELGWKPVNRQREVSFALKAYASMATSADKGAVRDKSKLEG.

Asp-81 is a binding site for Mg(2+). Position 122 (Cys-122) interacts with [2Fe-2S] cluster. Residues Asp-123 and Lys-124 each contribute to the Mg(2+) site. Position 124 is an N6-carboxylysine (Lys-124). A [2Fe-2S] cluster-binding site is contributed by Cys-195. Glu-491 contributes to the Mg(2+) binding site. Ser-517 serves as the catalytic Proton acceptor.

The protein belongs to the IlvD/Edd family. In terms of assembly, homodimer. Requires [2Fe-2S] cluster as cofactor. Mg(2+) serves as cofactor.

The catalysed reaction is (2R)-2,3-dihydroxy-3-methylbutanoate = 3-methyl-2-oxobutanoate + H2O. The enzyme catalyses (2R,3R)-2,3-dihydroxy-3-methylpentanoate = (S)-3-methyl-2-oxopentanoate + H2O. It functions in the pathway amino-acid biosynthesis; L-isoleucine biosynthesis; L-isoleucine from 2-oxobutanoate: step 3/4. It participates in amino-acid biosynthesis; L-valine biosynthesis; L-valine from pyruvate: step 3/4. In terms of biological role, functions in the biosynthesis of branched-chain amino acids. Catalyzes the dehydration of (2R,3R)-2,3-dihydroxy-3-methylpentanoate (2,3-dihydroxy-3-methylvalerate) into 2-oxo-3-methylpentanoate (2-oxo-3-methylvalerate) and of (2R)-2,3-dihydroxy-3-methylbutanoate (2,3-dihydroxyisovalerate) into 2-oxo-3-methylbutanoate (2-oxoisovalerate), the penultimate precursor to L-isoleucine and L-valine, respectively. This Aliivibrio fischeri (strain ATCC 700601 / ES114) (Vibrio fischeri) protein is Dihydroxy-acid dehydratase.